A 342-amino-acid polypeptide reads, in one-letter code: S-adenosylmethionine:tRNA ribosyltransferase-isomerase (342 aa).

The protein belongs to the QueA family. As to quaternary structure, monomer.

It localises to the cytoplasm. The catalysed reaction is 7-aminomethyl-7-carbaguanosine(34) in tRNA + S-adenosyl-L-methionine = epoxyqueuosine(34) in tRNA + adenine + L-methionine + 2 H(+). It functions in the pathway tRNA modification; tRNA-queuosine biosynthesis. Functionally, transfers and isomerizes the ribose moiety from AdoMet to the 7-aminomethyl group of 7-deazaguanine (preQ1-tRNA) to give epoxyqueuosine (oQ-tRNA). This chain is S-adenosylmethionine:tRNA ribosyltransferase-isomerase, found in Novosphingobium aromaticivorans (strain ATCC 700278 / DSM 12444 / CCUG 56034 / CIP 105152 / NBRC 16084 / F199).